The following is a 180-amino-acid chain: ADP-ribosylation factor 4 (180 aa).

G2 carries the N-myristoyl glycine lipid modification. Residues 24-31 (GLDAAGKT), 67-71 (DVGGQ), and 126-129 (NKQD) contribute to the GTP site. The residue at position 147 (S147) is a Phosphoserine.

It belongs to the small GTPase superfamily. Arf family. As to quaternary structure, forms a complex containing RAB11A, ASAP1, RAB3IP, RAP11FIP3 and ARF4; the complex promotes preciliary trafficking; the complex binds to RHO in photoreceptor cells and promotes RHO ciliary transport.

The protein localises to the golgi apparatus. Its subcellular location is the membrane. Functionally, GTP-binding protein that functions as an allosteric activator of the cholera toxin catalytic subunit, an ADP-ribosyltransferase. Involved in protein trafficking; may modulate vesicle budding and uncoating within the Golgi apparatus. Part of the ciliary targeting complex containing Rab11, ASAP1, Rabin8/RAB3IP, RAB11FIP3 and ARF4, which direct preciliary vesicle trafficking to mother centriole and ciliogenesis initiation. The chain is ADP-ribosylation factor 4 (ARF4) from Bos taurus (Bovine).